A 267-amino-acid chain; its full sequence is Undecaprenyl-diphosphatase (267 aa).

The next 8 helical transmembrane spans lie at methionine 1 to isoleucine 21, glutamine 39 to phenylalanine 59, serine 83 to phenylalanine 103, leucine 111 to valine 131, alanine 149 to isoleucine 169, phenylalanine 189 to methionine 209, leucine 218 to leucine 238, and methionine 246 to leucine 266.

The protein belongs to the UppP family.

Its subcellular location is the cell inner membrane. The enzyme catalyses di-trans,octa-cis-undecaprenyl diphosphate + H2O = di-trans,octa-cis-undecaprenyl phosphate + phosphate + H(+). Functionally, catalyzes the dephosphorylation of undecaprenyl diphosphate (UPP). Confers resistance to bacitracin. This chain is Undecaprenyl-diphosphatase, found in Aliivibrio fischeri (strain ATCC 700601 / ES114) (Vibrio fischeri).